The chain runs to 222 residues: Cytochrome b6 (222 aa).

The chain crosses the membrane as a helical span at residues 39–59 (IFYCLGGITLVCFIIQFATGF). Residue Cys-42 coordinates heme c. Heme b contacts are provided by His-93 and His-107. 3 helical membrane-spanning segments follow: residues 97 to 117 (ASMMVLMMILHVFRVYLTGGF), 123 to 143 (LTWMTGVILAVITVSFGVTGY), and 193 to 213 (LHTFVFPWLIAVFMLMHFLMI). 2 residues coordinate heme b: His-194 and His-209.

Belongs to the cytochrome b family. PetB subfamily. The 4 large subunits of the cytochrome b6-f complex are cytochrome b6, subunit IV (17 kDa polypeptide, PetD), cytochrome f and the Rieske protein, while the 4 small subunits are PetG, PetL, PetM and PetN. The complex functions as a dimer. It depends on heme b as a cofactor. Requires heme c as cofactor.

The protein resides in the cellular thylakoid membrane. Functionally, component of the cytochrome b6-f complex, which mediates electron transfer between photosystem II (PSII) and photosystem I (PSI), cyclic electron flow around PSI, and state transitions. The protein is Cytochrome b6 of Rippkaea orientalis (strain PCC 8801 / RF-1) (Cyanothece sp. (strain PCC 8801)).